The primary structure comprises 296 residues: Light-independent protochlorophyllide reductase iron-sulfur ATP-binding protein (296 aa).

Residues glycine 39–threonine 44 and lysine 68 each bind ATP. Serine 43 contributes to the Mg(2+) binding site. [4Fe-4S] cluster contacts are provided by cysteine 124 and cysteine 158. Asparagine 209–arginine 210 is a binding site for ATP.

It belongs to the NifH/BchL/ChlL family. As to quaternary structure, homodimer. Protochlorophyllide reductase is composed of three subunits; ChlL, ChlN and ChlB. Requires [4Fe-4S] cluster as cofactor.

The enzyme catalyses chlorophyllide a + oxidized 2[4Fe-4S]-[ferredoxin] + 2 ADP + 2 phosphate = protochlorophyllide a + reduced 2[4Fe-4S]-[ferredoxin] + 2 ATP + 2 H2O. It functions in the pathway porphyrin-containing compound metabolism; chlorophyll biosynthesis (light-independent). Its function is as follows. Component of the dark-operative protochlorophyllide reductase (DPOR) that uses Mg-ATP and reduced ferredoxin to reduce ring D of protochlorophyllide (Pchlide) to form chlorophyllide a (Chlide). This reaction is light-independent. The L component serves as a unique electron donor to the NB-component of the complex, and binds Mg-ATP. This chain is Light-independent protochlorophyllide reductase iron-sulfur ATP-binding protein, found in Synechococcus sp. (strain CC9605).